Reading from the N-terminus, the 148-residue chain is Deoxyuridine 5'-triphosphate nucleotidohydrolase (148 aa).

Residues 67–69 (RSG), Asn-80, 84–86 (LID), and Met-94 each bind substrate.

This sequence belongs to the dUTPase family. Requires Mg(2+) as cofactor.

It carries out the reaction dUTP + H2O = dUMP + diphosphate + H(+). It functions in the pathway pyrimidine metabolism; dUMP biosynthesis; dUMP from dCTP (dUTP route): step 2/2. Its function is as follows. This enzyme is involved in nucleotide metabolism: it produces dUMP, the immediate precursor of thymidine nucleotides and it decreases the intracellular concentration of dUTP so that uracil cannot be incorporated into DNA. The polypeptide is Deoxyuridine 5'-triphosphate nucleotidohydrolase (Burkholderia lata (strain ATCC 17760 / DSM 23089 / LMG 22485 / NCIMB 9086 / R18194 / 383)).